The following is a 435-amino-acid chain: Methylenetetrahydrofolate--tRNA-(uracil-5-)-methyltransferase TrmFO (435 aa).

Residue 7–12 (GAGLAG) participates in FAD binding.

The protein belongs to the MnmG family. TrmFO subfamily. FAD serves as cofactor.

It localises to the cytoplasm. It carries out the reaction uridine(54) in tRNA + (6R)-5,10-methylene-5,6,7,8-tetrahydrofolate + NADH + H(+) = 5-methyluridine(54) in tRNA + (6S)-5,6,7,8-tetrahydrofolate + NAD(+). The catalysed reaction is uridine(54) in tRNA + (6R)-5,10-methylene-5,6,7,8-tetrahydrofolate + NADPH + H(+) = 5-methyluridine(54) in tRNA + (6S)-5,6,7,8-tetrahydrofolate + NADP(+). Functionally, catalyzes the folate-dependent formation of 5-methyl-uridine at position 54 (M-5-U54) in all tRNAs. This Thermotoga neapolitana (strain ATCC 49049 / DSM 4359 / NBRC 107923 / NS-E) protein is Methylenetetrahydrofolate--tRNA-(uracil-5-)-methyltransferase TrmFO.